Here is a 117-residue protein sequence, read N- to C-terminus: Large ribosomal subunit protein uL18 (117 aa).

This sequence belongs to the universal ribosomal protein uL18 family. Part of the 50S ribosomal subunit; part of the 5S rRNA/L5/L18/L25 subcomplex. Contacts the 5S and 23S rRNAs.

This is one of the proteins that bind and probably mediate the attachment of the 5S RNA into the large ribosomal subunit, where it forms part of the central protuberance. This chain is Large ribosomal subunit protein uL18, found in Leuconostoc mesenteroides subsp. mesenteroides (strain ATCC 8293 / DSM 20343 / BCRC 11652 / CCM 1803 / JCM 6124 / NCDO 523 / NBRC 100496 / NCIMB 8023 / NCTC 12954 / NRRL B-1118 / 37Y).